A 130-amino-acid chain; its full sequence is Small ribosomal subunit protein uS9 (130 aa).

Residues 98–130 (LKRAGLLTRDPRMKERKKPGLKKARRSPQFSKR) are disordered. Residues 111–130 (KERKKPGLKKARRSPQFSKR) show a composition bias toward basic residues.

The protein belongs to the universal ribosomal protein uS9 family.

In Staphylococcus carnosus (strain TM300), this protein is Small ribosomal subunit protein uS9 (rpsI).